Here is a 313-residue protein sequence, read N- to C-terminus: ADP-L-glycero-D-manno-heptose-6-epimerase (313 aa).

NADP(+) is bound by residues 10-11, 31-32, Lys38, Arg53, 75-79, and Asn92; these read MI, DN, and EGACS. The active-site Proton acceptor is Tyr139. An NADP(+)-binding site is contributed by Lys143. Asn174 is a substrate binding site. NADP(+)-binding residues include Val175 and Lys183. Lys183 (proton acceptor) is an active-site residue. Substrate is bound by residues Ser185, His192, 206 to 209, Arg214, and Tyr277; that span reads FAGS.

Belongs to the NAD(P)-dependent epimerase/dehydratase family. HldD subfamily. In terms of assembly, homopentamer. It depends on NADP(+) as a cofactor.

It catalyses the reaction ADP-D-glycero-beta-D-manno-heptose = ADP-L-glycero-beta-D-manno-heptose. Its pathway is nucleotide-sugar biosynthesis; ADP-L-glycero-beta-D-manno-heptose biosynthesis; ADP-L-glycero-beta-D-manno-heptose from D-glycero-beta-D-manno-heptose 7-phosphate: step 4/4. It participates in bacterial outer membrane biogenesis; LPS core biosynthesis. Functionally, catalyzes the interconversion between ADP-D-glycero-beta-D-manno-heptose and ADP-L-glycero-beta-D-manno-heptose via an epimerization at carbon 6 of the heptose. The protein is ADP-L-glycero-D-manno-heptose-6-epimerase of Vibrio vulnificus (strain CMCP6).